The primary structure comprises 286 residues: 4-diphosphocytidyl-2-C-methyl-D-erythritol kinase (286 aa).

The active site involves K13. 99–109 is an ATP binding site; it reads PMGGGLGGGSS. D141 is an active-site residue.

It belongs to the GHMP kinase family. IspE subfamily.

The enzyme catalyses 4-CDP-2-C-methyl-D-erythritol + ATP = 4-CDP-2-C-methyl-D-erythritol 2-phosphate + ADP + H(+). It functions in the pathway isoprenoid biosynthesis; isopentenyl diphosphate biosynthesis via DXP pathway; isopentenyl diphosphate from 1-deoxy-D-xylulose 5-phosphate: step 3/6. In terms of biological role, catalyzes the phosphorylation of the position 2 hydroxy group of 4-diphosphocytidyl-2C-methyl-D-erythritol. In Herminiimonas arsenicoxydans, this protein is 4-diphosphocytidyl-2-C-methyl-D-erythritol kinase.